Reading from the N-terminus, the 586-residue chain is Eukaryotic translation initiation factor 3 subunit D (586 aa).

The segment at 107 to 154 (FGRGGGTVFRGRAQRGGAGQRGGRAGFQRVGAGRGQGGDRYYDNRGAR) is disordered. Gly residues predominate over residues 108–131 (GRGGGTVFRGRAQRGGAGQRGGRA). Positions 301 to 315 (SLDLVTVNENAADAP) are RNA gate. Residues 566-577 (FEEDDEAAEEEQ) are compositionally biased toward acidic residues. Residues 566–586 (FEEDDEAAEEEQEAKGEVEEA) are disordered.

It belongs to the eIF-3 subunit D family. Component of the eukaryotic translation initiation factor 3 (eIF-3) complex.

The protein resides in the cytoplasm. In terms of biological role, mRNA cap-binding component of the eukaryotic translation initiation factor 3 (eIF-3) complex, which is involved in protein synthesis of a specialized repertoire of mRNAs and, together with other initiation factors, stimulates binding of mRNA and methionyl-tRNAi to the 40S ribosome. The eIF-3 complex specifically targets and initiates translation of a subset of mRNAs involved in cell proliferation. In the eIF-3 complex, eif3d specifically recognizes and binds the 7-methylguanosine cap of a subset of mRNAs. The protein is Eukaryotic translation initiation factor 3 subunit D of Emericella nidulans (strain FGSC A4 / ATCC 38163 / CBS 112.46 / NRRL 194 / M139) (Aspergillus nidulans).